The chain runs to 802 residues: MGHPPLEFSDCYLDSPDFRERLKCYEQELERTNKFIKDVIKDGNALISAMRNYSSAVQKFSQTLQSFQFDFIGDTLTDDEINIAESFKEFAELLNEVENERMMMVHNASDLLIKPLENFRKEQIGFTKERKKKFEKDGERFYSLLDRHLHLSSKKKESQLQEADLQVDKERHNFFESSLDYVYQIQEVQESKKFNIVEPVLAFLHSLFISNSLTVELTQDFLPYKQQLQLSLQNTRNHFSSTREEMEELKKRMKEAPQTCKLPGQPTIEGYLYTQEKWALGISWVKYYCQYEKETKTLTMTPMEQKPGAKQGPLDLTLKYCVRRKTESIDKRFCFDIETNERPGTITLQALSEANRRLWMEAMDGKEPIYHSPITKQQEMELNEVGFKFVRKCINIIETKGIKTEGLYRTVGSNIQVQKLLNAFFDPKCPGDVDFHNSDWDIKTITSSLKFYLRNLSEPVMTYRLHKELVSAAKSDNLDYRLGAIHSLVYKLPEKNREMLELLIRHLVNVCEHSKENLMTPSNMGVIFGPTLMRAQEDTVAAMMNIKFQNIVVEILIEHFGKIYLGPPEESAAPPVPPPRVTARRHKPITISKRLLRERTVFYTSSLDESEDEIQHQTPNGTITSSIEPPKPPQHPKLPIQRSGETDPGRKSPSRPISDGKLEPCPEVDVGKLVSRLQDGGTKITPKATNGPMPGSGPTKTPSFHIKRPAPRPLAHHKEGDADSFSKVRPPGEKPTIIRPPVRPPDPPCRAATPQKPEPKPDIVAGNAGEITSSVVASRTRFFETASRKTGSSQGRLPGDES.

The 104-residue stretch at 265-368 folds into the PH domain; it reads QPTIEGYLYT…WMEAMDGKEP (104 aa). In terms of domain architecture, Rho-GAP spans 380 to 564; it reads MELNEVGFKF…ILIEHFGKIY (185 aa). 3 disordered regions span residues 569–589, 607–770, and 783–802; these read EESA…HKPI, LDES…NAGE, and FETA…GDES. Residues 616 to 627 show a composition bias toward polar residues; the sequence is HQTPNGTITSSI. Positions 716–732 are enriched in basic and acidic residues; that stretch reads HHKEGDADSFSKVRPPG.

In terms of assembly, interacts with HOMER1. Interacts with AMPA receptor complexes. Interacts with SH3GL2 (endophilin-A1). Interacts (via C-terminus) with NR1D1.

Its subcellular location is the postsynapse. It localises to the presynapse. It is found in the cell projection. The protein localises to the axon. The protein resides in the dendritic spine. Its subcellular location is the dendrite. It localises to the cytoplasm. Its function is as follows. Stimulates GTP hydrolysis of members of the Rho family. Its action on RHOA activity and signaling is implicated in growth and stabilization of dendritic spines, and therefore in synaptic function. Critical for the stabilization of AMPA receptors at postsynaptic sites. Critical for the regulation of synaptic vesicle endocytosis at pre-synaptic terminals. Required for the localization of NR1D1 to dendrites, can suppress its repressor activity and protect it from proteasomal degradation. This Pan troglodytes (Chimpanzee) protein is Oligophrenin-1 (OPHN1).